The following is a 129-amino-acid chain: Small ribosomal subunit protein uS11 (129 aa).

The protein belongs to the universal ribosomal protein uS11 family. Part of the 30S ribosomal subunit. Interacts with proteins S7 and S18. Binds to IF-3.

Located on the platform of the 30S subunit, it bridges several disparate RNA helices of the 16S rRNA. Forms part of the Shine-Dalgarno cleft in the 70S ribosome. In Desulfovibrio desulfuricans (strain ATCC 27774 / DSM 6949 / MB), this protein is Small ribosomal subunit protein uS11.